Here is a 290-residue protein sequence, read N- to C-terminus: Inositol monophosphatase 2 (290 aa).

The Mg(2+) site is built by glutamate 83, aspartate 103, isoleucine 105, and aspartate 106. Glutamate 83 is a substrate binding site. Substrate-binding positions include 105–108 (IDGT), 207–209 (GSS), glutamine 226, and aspartate 233. Residue aspartate 233 coordinates Mg(2+).

Belongs to the inositol monophosphatase superfamily. Homodimer. The cofactor is Mg(2+).

The protein resides in the cytoplasm. It catalyses the reaction a myo-inositol phosphate + H2O = myo-inositol + phosphate. Its pathway is polyol metabolism; myo-inositol biosynthesis; myo-inositol from D-glucose 6-phosphate: step 2/2. In terms of biological role, can use myo-inositol monophosphates, scylloinositol 1,4-diphosphate, glucose-1-phosphate, beta-glycerophosphate, and 2'-AMP as substrates. Has been implicated as the pharmacological target for lithium Li(+) action in brain. This is Inositol monophosphatase 2 (Impa2) from Rattus norvegicus (Rat).